Here is a 310-residue protein sequence, read N- to C-terminus: Carbamate kinase 1 (310 aa).

This sequence belongs to the carbamate kinase family.

It localises to the cytoplasm. It catalyses the reaction hydrogencarbonate + NH4(+) + ATP = carbamoyl phosphate + ADP + H2O + H(+). The protein operates within metabolic intermediate metabolism; carbamoyl phosphate degradation; CO(2) and NH(3) from carbamoyl phosphate: step 1/1. The chain is Carbamate kinase 1 (arcC1) from Staphylococcus aureus (strain COL).